Consider the following 554-residue polypeptide: Glutamine--tRNA ligase (554 aa).

Residues 34 to 44 (PEPNGYLHIGH) carry the 'HIGH' region motif. ATP-binding positions include 35–37 (EPN) and 41–47 (HIGHAKS). Aspartate 67 and tyrosine 212 together coordinate L-glutamine. ATP-binding positions include threonine 231, 261–262 (RL), and 269–271 (MSK). The short motif at 268–272 (VMSKR) is the 'KMSKS' region element. An interaction with tRNA region spans residues 317 to 324 (TKQDNTIE).

The protein belongs to the class-I aminoacyl-tRNA synthetase family. Monomer.

It localises to the cytoplasm. It carries out the reaction tRNA(Gln) + L-glutamine + ATP = L-glutaminyl-tRNA(Gln) + AMP + diphosphate. The sequence is that of Glutamine--tRNA ligase from Escherichia coli (strain 55989 / EAEC).